A 1551-amino-acid chain; its full sequence is Pentafunctional AROM polypeptide (1551 aa).

Residues 1–379 (MSIEKVPILG…YQLKAHQVSK (379 aa)) are 3-dehydroquinate synthase. NAD(+) is bound by residues 42–44 (DTN), 80–83 (ENNK), 111–113 (GGV), and D116. R127 contributes to the 7-phospho-2-dehydro-3-deoxy-D-arabino-heptonate binding site. 136 to 137 (TT) provides a ligand contact to NAD(+). 2 residues coordinate 7-phospho-2-dehydro-3-deoxy-D-arabino-heptonate: D143 and K149. Residue K158 participates in NAD(+) binding. Position 159 (N159) interacts with 7-phospho-2-dehydro-3-deoxy-D-arabino-heptonate. Residues 176–179 (FLET) and N187 each bind NAD(+). E191 is a binding site for Zn(2+). 7-phospho-2-dehydro-3-deoxy-D-arabino-heptonate-binding positions include 191-194 (EVVK) and K243. Catalysis depends on E253, which acts as the Proton acceptor; for 3-dehydroquinate synthase activity. 7-phospho-2-dehydro-3-deoxy-D-arabino-heptonate-binding positions include 257 to 261 (RNLLN) and H264. H264 is a Zn(2+) binding site. Catalysis depends on H268, which acts as the Proton acceptor; for 3-dehydroquinate synthase activity. 7-phospho-2-dehydro-3-deoxy-D-arabino-heptonate-binding residues include H280 and K351. H280 is a binding site for Zn(2+). The EPSP synthase stretch occupies residues 392-838 (VHPFTNPPKE…WDILHSKFKI (447 aa)). Residues 858-1048 (DKSIIVIGMR…VPAGRSAAVV (191 aa)) are shikimate kinase. Residue 865–872 (GMRGTGKS) coordinates ATP. Residues 1049-1258 (LTSPDLNEVV…NDEEFLTIGE (210 aa)) are 3-dehydroquinase. Residue R1194 is the Schiff-base intermediate with substrate; for 3-dehydroquinate dehydratase activity of the active site. Residues 1271 to 1551 (AKKFWVIGSP…EIIHRAVVEE (281 aa)) are shikimate dehydrogenase.

The protein in the N-terminal section; belongs to the sugar phosphate cyclases superfamily. Dehydroquinate synthase family. It in the 2nd section; belongs to the EPSP synthase family. This sequence in the 3rd section; belongs to the shikimate kinase family. In the 4th section; belongs to the type-I 3-dehydroquinase family. The protein in the C-terminal section; belongs to the shikimate dehydrogenase family. Homodimer. Zn(2+) is required as a cofactor.

Its subcellular location is the cytoplasm. The enzyme catalyses 7-phospho-2-dehydro-3-deoxy-D-arabino-heptonate = 3-dehydroquinate + phosphate. It catalyses the reaction 3-dehydroquinate = 3-dehydroshikimate + H2O. The catalysed reaction is shikimate + NADP(+) = 3-dehydroshikimate + NADPH + H(+). It carries out the reaction shikimate + ATP = 3-phosphoshikimate + ADP + H(+). The enzyme catalyses 3-phosphoshikimate + phosphoenolpyruvate = 5-O-(1-carboxyvinyl)-3-phosphoshikimate + phosphate. Its pathway is metabolic intermediate biosynthesis; chorismate biosynthesis; chorismate from D-erythrose 4-phosphate and phosphoenolpyruvate: step 2/7. It participates in metabolic intermediate biosynthesis; chorismate biosynthesis; chorismate from D-erythrose 4-phosphate and phosphoenolpyruvate: step 3/7. The protein operates within metabolic intermediate biosynthesis; chorismate biosynthesis; chorismate from D-erythrose 4-phosphate and phosphoenolpyruvate: step 4/7. It functions in the pathway metabolic intermediate biosynthesis; chorismate biosynthesis; chorismate from D-erythrose 4-phosphate and phosphoenolpyruvate: step 5/7. Its pathway is metabolic intermediate biosynthesis; chorismate biosynthesis; chorismate from D-erythrose 4-phosphate and phosphoenolpyruvate: step 6/7. The AROM polypeptide catalyzes 5 consecutive enzymatic reactions in prechorismate polyaromatic amino acid biosynthesis. This chain is Pentafunctional AROM polypeptide, found in Candida albicans (strain SC5314 / ATCC MYA-2876) (Yeast).